Here is a 272-residue protein sequence, read N- to C-terminus: Interleukin-2 receptor subunit alpha (272 aa).

An N-terminal signal peptide occupies residues 1–21 (MDPYLLMWGLLTFITVPGCQA). In terms of domain architecture, Sushi 1 spans 22-84 (ELCDDDPPKI…SWDNQCQCTS (63 aa)). The Extracellular segment spans residues 22-240 (ELCDDDPPKI…ETFIFTTEYQ (219 aa)). 3 disulfide bridges follow: C24–C67, C49–C80, and C51–C82. N70 and N89 each carry an N-linked (GlcNAc...) asparagine glycan. Positions 87-98 (ARNTTKQVTPQP) are enriched in polar residues. Positions 87 to 109 (ARNTTKQVTPQPEEQKERKTTEM) are disordered. The region spanning 123-186 (GHCREPPPWE…WTQPQLICTG (64 aa)) is the Sushi 2 domain. Intrachain disulfides connect C125/C168 and C152/C184. Positions 186–213 (GETEPSQFPGEEEPQASPDGLPESETSR) are disordered. Residues 241–259 (VAVAGCVFLLISVLLLSGL) form a helical membrane-spanning segment. The Cytoplasmic segment spans residues 260–272 (TWQRRQRKNRRTI).

As to quaternary structure, non-covalent dimer of an alpha and a beta subunit. IL2R exists in 3 different forms: a high affinity dimer, an intermediate affinity monomer (beta subunit), and a low affinity monomer (alpha subunit). The high and intermediate affinity forms also associate with a gamma subunit.

The protein resides in the membrane. In terms of biological role, receptor for interleukin-2. The receptor is involved in the regulation of immune tolerance by controlling regulatory T cells (TREGs) activity. TREGs suppress the activation and expansion of autoreactive T-cells. The polypeptide is Interleukin-2 receptor subunit alpha (IL2RA) (Macaca mulatta (Rhesus macaque)).